Reading from the N-terminus, the 439-residue chain is uncharacterized protein (439 aa).

Positions 273 to 439 constitute a VWFA domain; sequence PIIILLDHSG…EARKIYKSIS (167 aa).

This is an uncharacterized protein from Methanocaldococcus jannaschii (strain ATCC 43067 / DSM 2661 / JAL-1 / JCM 10045 / NBRC 100440) (Methanococcus jannaschii).